The following is a 106-amino-acid chain: Ribulose bisphosphate carboxylase small subunit (106 aa).

It belongs to the RuBisCO small chain family. In terms of assembly, heterohexadecamer of 8 large and 8 small subunits.

It localises to the plastid. Its subcellular location is the cyanelle. In terms of biological role, ruBisCO catalyzes two reactions: the carboxylation of D-ribulose 1,5-bisphosphate, the primary event in carbon dioxide fixation, as well as the oxidative fragmentation of the pentose substrate. Both reactions occur simultaneously and in competition at the same active site. Although the small subunit is not catalytic it is essential for maximal activity. This chain is Ribulose bisphosphate carboxylase small subunit, found in Cyanophora paradoxa.